Here is a 116-residue protein sequence, read N- to C-terminus: Large ribosomal subunit protein uL18 (116 aa).

It belongs to the universal ribosomal protein uL18 family. As to quaternary structure, part of the 50S ribosomal subunit; part of the 5S rRNA/L5/L18/L25 subcomplex. Contacts the 5S and 23S rRNAs.

In terms of biological role, this is one of the proteins that bind and probably mediate the attachment of the 5S RNA into the large ribosomal subunit, where it forms part of the central protuberance. This chain is Large ribosomal subunit protein uL18, found in Mycoplasma pneumoniae (strain ATCC 29342 / M129 / Subtype 1) (Mycoplasmoides pneumoniae).